A 370-amino-acid chain; its full sequence is UDP-N-acetylglucosamine--N-acetylmuramyl-(pentapeptide) pyrophosphoryl-undecaprenol N-acetylglucosamine transferase (370 aa).

UDP-N-acetyl-alpha-D-glucosamine is bound by residues 20–22, Asn-134, Arg-170, Ser-204, Ile-257, and Gln-301; that span reads TAG.

The protein belongs to the glycosyltransferase 28 family. MurG subfamily.

It localises to the cell membrane. It catalyses the reaction di-trans,octa-cis-undecaprenyl diphospho-N-acetyl-alpha-D-muramoyl-L-alanyl-D-glutamyl-meso-2,6-diaminopimeloyl-D-alanyl-D-alanine + UDP-N-acetyl-alpha-D-glucosamine = di-trans,octa-cis-undecaprenyl diphospho-[N-acetyl-alpha-D-glucosaminyl-(1-&gt;4)]-N-acetyl-alpha-D-muramoyl-L-alanyl-D-glutamyl-meso-2,6-diaminopimeloyl-D-alanyl-D-alanine + UDP + H(+). The protein operates within cell wall biogenesis; peptidoglycan biosynthesis. In terms of biological role, cell wall formation. Catalyzes the transfer of a GlcNAc subunit on undecaprenyl-pyrophosphoryl-MurNAc-pentapeptide (lipid intermediate I) to form undecaprenyl-pyrophosphoryl-MurNAc-(pentapeptide)GlcNAc (lipid intermediate II). The protein is UDP-N-acetylglucosamine--N-acetylmuramyl-(pentapeptide) pyrophosphoryl-undecaprenol N-acetylglucosamine transferase of Corynebacterium jeikeium (strain K411).